We begin with the raw amino-acid sequence, 150 residues long: KLPYSITVTYDHRTSPHIPFSSHIGKQNSFFSFLSRKKSMYHHITFCSVPATDGRARGQRPTGHFHLFFVVNRLLPRTRSTTKPSCSFAQPVTPRTREGAGVRGHRRRRRGSLSLIPWKTSNDKQKDDKRSLFCYMREIIAVGNFSKYML.

The segment covering 81–90 (TTKPSCSFAQ) has biased composition (polar residues). Residues 81–125 (TTKPSCSFAQPVTPRTREGAGVRGHRRRRRGSLSLIPWKTSNDKQ) form a disordered region.

This is an uncharacterized protein from Homo sapiens (Human).